The chain runs to 391 residues: Tumor susceptibility gene 101 protein (391 aa).

Ala-2 is modified (N-acetylalanine). The UEV domain maps to 2–145 (AVSESQLKKM…GEEPPVFSRP (144 aa)). Residues 159–163 (PPNTS) form an interaction with CEP55 region. Residues 197–220 (YPATTSSQYPSQPPVTTVGPSRDG) are disordered. Over residues 200-215 (TTSSQYPSQPPVTTVG) the composition is skewed to polar residues. Phosphothreonine is present on Thr-221. A coiled-coil region spans residues 237–317 (DKLRWRMKEE…NQSENNDIDE (81 aa)). The PTAP/PSAP motif signature appears at 321–324 (PTAP). In terms of domain architecture, SB spans 323-391 (APLYKQILNL…RKTAGLSDLY (69 aa)).

Belongs to the ubiquitin-conjugating enzyme family. UEV subfamily. In terms of assembly, component of the ESCRT-I complex (endosomal sorting complex required for transport I) which consists of TSG101, VPS28, a VPS37 protein (VPS37A to -D) and MVB12A or MVB12B in a 1:1:1:1 stoichiometry. Interacts with VPS37A, VPS37B and VPS37C. Component of an ESCRT-I complex (endosomal sorting complex required for transport I) which consists of TSG101, VPS28, VPS37A and UBAP1 in a 1:1:1:1 stoichiometry. Interacts with DMAP1. Interacts with GMCL. Interacts with ubiquitin, stathmin and AATF. Interacts with HGS; the interaction mediates the association with the ESCRT-0 complex. Interacts with GGA1 and GGA3. Interacts (via UEV domain) with PDCD6IP/AIP1. Interacts with VPS28, SNF8 and VPS36. Self-associates. Interacts with MVB12A; the association appears to be mediated by the TSG101-VPS37 binary subcomplex. Interacts with VPS37D. Interacts with LRSAM1. Interacts with CEP55; the interaction is required for cytokinesis. Interacts with PDCD6. Interacts with LITAF. Interacts with murine leukemia virus Gag polyprotein (via PSAP motif). Interacts with MGRN1. Interacts with ARRDC1; recruits TSG101 to the plasma membrane. In terms of processing, monoubiquitinated at multiple sites by LRSAM1 and by MGRN1. Ubiquitination inactivates it, possibly by regulating its shuttling between an active membrane-bound protein and an inactive soluble form. Ubiquitination by MGRN1 requires the presence of UBE2D1. Ubiquitous. Higher expression in brain and mammary gland. Lower expression in liver and tumoral tissues.

It is found in the cytoplasm. Its subcellular location is the early endosome membrane. The protein resides in the late endosome membrane. It localises to the cytoskeleton. The protein localises to the microtubule organizing center. It is found in the centrosome. Its subcellular location is the midbody. The protein resides in the midbody ring. It localises to the nucleus. Functionally, component of the ESCRT-I complex, a regulator of vesicular trafficking process. Binds to ubiquitinated cargo proteins and is required for the sorting of endocytic ubiquitinated cargos into multivesicular bodies (MVBs). Mediates the association between the ESCRT-0 and ESCRT-I complex. Required for completion of cytokinesis; the function requires CEP55. May be involved in cell growth and differentiation. Acts as a negative growth regulator. Required for the exosomal release of SDCBP, CD63 and syndecan. It may also play a role in the extracellular release of microvesicles that differ from the exosomes. This chain is Tumor susceptibility gene 101 protein (Tsg101), found in Mus musculus (Mouse).